Here is a 519-residue protein sequence, read N- to C-terminus: Membrane protein insertase YidC (519 aa).

6 consecutive transmembrane segments (helical) span residues 6–26 (ILFV…FAQP), 298–318 (VDFG…VFFY), 324–344 (YGWA…PLTL), 390–410 (LGGC…FTML), 434–454 (FMQF…IGMF), and 471–491 (IMYI…SGLV).

This sequence belongs to the OXA1/ALB3/YidC family. Type 1 subfamily. In terms of assembly, interacts with the Sec translocase complex via SecD. Specifically interacts with transmembrane segments of nascent integral membrane proteins during membrane integration.

It is found in the cell inner membrane. Its function is as follows. Required for the insertion and/or proper folding and/or complex formation of integral membrane proteins into the membrane. Involved in integration of membrane proteins that insert both dependently and independently of the Sec translocase complex, as well as at least some lipoproteins. Aids folding of multispanning membrane proteins. The polypeptide is Membrane protein insertase YidC (Endomicrobium trichonymphae).